The chain runs to 349 residues: Sphingomyelinase D (349 aa).

The first 18 residues, 1 to 18 (MLLSSLISLALLSSQVVA), serve as a signal peptide directing secretion. His52 is a catalytic residue. Mg(2+) is bound by residues Glu72, Asp74, and Asp123. An SMD-tail motif is present at residues 310-317 (ATNDNNPW).

The protein belongs to the sphingomyelinase D/phospholipase D family. It depends on Mg(2+) as a cofactor.

Its subcellular location is the secreted. The catalysed reaction is a sphingomyelin + H2O = an N-acylsphing-4-enine 1-phosphate + choline + H(+). In terms of biological role, catalyzes the hydrolysis of sphingomyelin. Sphingomyelinases D are produced by some spider in their venoms, but also by arthropods such as ticks, or pathogenic bacteria and fungi. They might play a role in pathogenicity through different mechanisms, such as membrane destabilization and host cell penetration, but also pulmonary inflammation and cutaneous lesions. The protein is Sphingomyelinase D of Uncinocarpus reesii (strain UAMH 1704).